The following is a 131-amino-acid chain: MTTKRKAYVRPMTSTWWKKLPFYRFYMLREGTAVPAVWFSIELIFGLFALKHGAESWMGFVGFLQNPVVVILNLIALAAALLHTKTWFELAPKAANIIVKDEKMGPEPIIKGLWVVTAVVTVVILYVALYW.

The next 3 helical transmembrane spans lie at 30–50 (EGTA…LFAL), 57–77 (WMGF…LIAL), and 109–129 (IIKG…YVAL).

Belongs to the FrdC family. As to quaternary structure, part of an enzyme complex containing four subunits: a flavoprotein (FrdA), an iron-sulfur protein (FrdB), and two hydrophobic anchor proteins (FrdC and FrdD).

The protein localises to the cell inner membrane. Its function is as follows. Two distinct, membrane-bound, FAD-containing enzymes are responsible for the catalysis of fumarate and succinate interconversion; fumarate reductase is used in anaerobic growth, and succinate dehydrogenase is used in aerobic growth. Anchors the catalytic components of the fumarate reductase complex to the cell inner membrane, binds quinones. The sequence is that of Fumarate reductase subunit C from Citrobacter koseri (strain ATCC BAA-895 / CDC 4225-83 / SGSC4696).